We begin with the raw amino-acid sequence, 2547 residues long: Piezo-type mechanosensitive ion channel component 1 (2547 aa).

The Cytoplasmic portion of the chain corresponds to 1–12; that stretch reads MEPHVLGAGLYW. Residues 13-25 traverse the membrane as a helical segment; it reads LLLPCTLLAASLL. The Extracellular segment spans residues 26 to 28; the sequence is RFN. Residues 29–44 traverse the membrane as a helical segment; it reads ALSLVYLLFLLLLPWL. At 45 to 58 the chain is on the cytoplasmic side; it reads PGPSRHSIPGHTGR. A helical transmembrane segment spans residues 59-81; sequence LLRALLCLSLLFLVAHLAFQICL. Topologically, residues 82 to 121 are extracellular; sequence HTVPHLDQFLGQNGSLWVKVSQHIGVTRLDLKDIFNTTRL. N-linked (GlcNAc...) asparagine glycosylation is present at Asn-94. Residues 122 to 138 form a helical membrane-spanning segment; sequence VAPDLGVLLASSLCLGL. At 139-201 the chain is on the cytoplasmic side; it reads CGRLTRKAGQ…ASRFRVTAHW (63 aa). The chain crosses the membrane as a helical span at residues 202–221; it reads LLMTSGRTLVIVLLALAGIA. At 222-223 the chain is on the extracellular side; it reads HP. Residues 224–243 traverse the membrane as a helical segment; the sequence is SAFSSIYLVVFLAICTWWSC. Over 244–254 the chain is Cytoplasmic; sequence HFPLSPLGFNT. A helical transmembrane segment spans residues 255–275; the sequence is LCVMVSCFGAGHLICLYCYQT. The Extracellular segment spans residues 276-316; sequence PFIQDMLPPGNIWARLFGLKNFVDLPNYSSPNALVLNTKHA. The helical transmembrane segment at 317 to 337 threads the bilayer; that stretch reads WPIYVSPGILLLLYYTATSLL. Residues 338 to 424 are Cytoplasmic-facing; that stretch reads KLHKSCPSEL…EMSPLHGLGH (87 aa). A disordered region spans residues 347–387; sequence LRKETPREDEEHELELDHLEPEPQARDATQGEMPMTTEPDL. Positions 361 to 371 are enriched in basic and acidic residues; the sequence is ELDHLEPEPQA. A helical transmembrane segment spans residues 425-445; sequence LIMDQSYVCALIAMMVWSIMY. Topologically, residues 446–447 are extracellular; it reads HS. A helical membrane pass occupies residues 448–463; that stretch reads WLTFVLLLWACLIWTV. Residues 464 to 468 are Cytoplasmic-facing; sequence RSRHQ. Residues 469 to 491 traverse the membrane as a helical segment; that stretch reads LAMLCSPCILLYGLTLCCLRYVW. At 492-518 the chain is on the extracellular side; sequence AMELPELPTTLGPVSLHQLGLEHTRYP. The chain crosses the membrane as a helical span at residues 519-536; it reads CLDLGAMLLYLLTFWLLL. At 537–580 the chain is on the cytoplasmic side; sequence RQFVKEKLLKKQKVPAALLEVTVADTEPTQTQTLLRSLGELVTG. The helical transmembrane segment at 581-601 threads the bilayer; sequence IYVKYWIYVCAGMFIVVSFAG. Arg-602 is a topological domain (extracellular). A helical transmembrane segment spans residues 603 to 623; that stretch reads LVVYKIVYMFLFLLCLTLFQV. Topologically, residues 624 to 633 are cytoplasmic; that stretch reads YYTLWRKLLR. Residues 634 to 655 form a helical membrane-spanning segment; sequence VFWWLVVAYTMLVLIAVYTFQF. Residues 656-685 lie on the Extracellular side of the membrane; it reads QDFPTYWRNLTGFTDEQLGDLGLEQFSVSE. The chain crosses the membrane as a helical span at residues 686–702; that stretch reads LFSSILIPGFFLLACIL. Residues 703–811 are Cytoplasmic-facing; sequence QLHYFHRPFM…RRLLELHVFK (109 aa). A Phosphoserine modification is found at Ser-758. A helical membrane pass occupies residues 812-823; the sequence is LVALYTVWVALK. Over 824–826 the chain is Extracellular; that stretch reads EVS. Residues 827–840 traverse the membrane as a helical segment; the sequence is VMNLLLVVLWAFAL. Residues 841–854 are Cytoplasmic-facing; it reads PYPRFRPMASCLST. The helical transmembrane segment at 855-869 threads the bilayer; the sequence is VWTCIIIVCKMLYQL. Topologically, residues 870–921 are extracellular; the sequence is KIVNPHEYSSNCTEPFPNNTNLQPLEINQSLLYRGPVDPANWFGVRKGYPNL. Residues 922–949 form a helical membrane-spanning segment; sequence GYIQNHLQILLLLVFEAVVYRRQEHYRR. The Cytoplasmic portion of the chain corresponds to 950–989; that stretch reads QHQQAPLPAQAVCADGTRQRLDQDLLSCLKYFINFFFYKF. Residues 990 to 1005 traverse the membrane as a helical segment; the sequence is GLEICFLMAVNVIGQR. Residues 1006-1007 are Extracellular-facing; the sequence is MN. Residues 1008–1023 form a helical membrane-spanning segment; it reads FMVILHGCWLVAILTR. Over 1024–1036 the chain is Cytoplasmic; it reads RRREAIARLWPNY. The helical transmembrane segment at 1037–1052 threads the bilayer; the sequence is CLFLTLFLLYQYLLCL. Topologically, residues 1053–1091 are extracellular; that stretch reads GMPPALCIDYPWRWSKAIPMNSALIKWLYLPDFFRAPNS. The helical transmembrane segment at 1092–1113 threads the bilayer; that stretch reads TNLISDFLLLLCASQQWQVFSA. Topologically, residues 1114-1148 are cytoplasmic; that stretch reads ERTEEWQRMAGINTDHLEPLRGEPNPIPNFIHCRS. The helical transmembrane segment at 1149-1175 threads the bilayer; that stretch reads YLDMLKVAVFRYLFWLVLVVVFVAGAT. Over 1176–1180 the chain is Extracellular; the sequence is RISIF. The chain crosses the membrane as a helical span at residues 1181–1199; sequence GLGYLLACFYLLLFGTTLL. The Cytoplasmic portion of the chain corresponds to 1200-1212; the sequence is QKDTRAQLVLWDC. The helical transmembrane segment at 1213 to 1231 threads the bilayer; sequence LILYNVTVIISKNMLSLLS. The Extracellular portion of the chain corresponds to 1232–1280; it reads CVFVEQMQSNFCWVIQLFSLVCTVKGYYDPKEMMTRDRDCLLPVEEAGI. Residues 1281–1297 form a helical membrane-spanning segment; sequence IWDSICFFFLLLQRRIF. Topologically, residues 1298–1656 are cytoplasmic; it reads LSHYFLHVSA…ELLLDRRLHI (359 aa). Residues 1334–1365 are a coiled coil; the sequence is HRQIEEKSLAQLKRQMKRIRAKQEKYRQSQAS. Disordered regions lie at residues 1354–1396, 1456–1480, and 1567–1610; these read AKQE…RRQW, RRER…DVEP, and TLSG…NTRS. Residues 1361-1372 show a composition bias toward polar residues; it reads QSQASRGQLQSK. Residues 1376–1392 are compositionally biased toward low complexity; that stretch reads DPSQEPGPDSPGGSSPP. Phosphoserine is present on residues Ser-1385 and Ser-1390. A compositionally biased stretch (polar residues) spans 1592–1610; the sequence is SSMTDDTSSPLSTGYNTRS. 3 positions are modified to phosphoserine: Ser-1627, Ser-1631, and Ser-1646. The helical transmembrane segment at 1657–1700 threads the bilayer; it reads PELEEAERFEAQQGRTLRLLRAGYQCVAAHSELLCYFIIILNHM. Topologically, residues 1701–1704 are extracellular; sequence VTAS. Residues 1705–1720 traverse the membrane as a helical segment; the sequence is AASLVLPVLVFLWAML. Residues 1721-1728 are Cytoplasmic-facing; the sequence is TIPRPSKR. The helical transmembrane segment at 1729 to 1747 threads the bilayer; it reads FWMTAIVFTEVMVVTKYLF. At 1748 to 1779 the chain is on the extracellular side; it reads QFGFFPWNSYVVLRRYENKPYFPPRILGLEKT. Residues 1780–1801 traverse the membrane as a helical segment; sequence DSYIKYDLVQLMALFFHRSQLL. Over 1802–1976 the chain is Cytoplasmic; the sequence is CYGLWDHEED…HTKYRAATDV (175 aa). Composition is skewed to basic and acidic residues over residues 1816-1837 and 1855-1880; these read DHCR…KLES and PRDH…DLKP. The segment at 1816–1931 is disordered; that stretch reads DHCRSSVKDR…RPRHTQEKSK (116 aa). The segment covering 1881–1894 has biased composition (basic residues); sequence RHTRHISIRFRRRK. Residues 1912 to 1931 are compositionally biased toward basic and acidic residues; it reads GEGKETTERKRPRHTQEKSK. The chain crosses the membrane as a helical span at residues 1977–1996; sequence YALMFLADIVDIIIIIFGFW. Topologically, residues 1997-2016 are extracellular; that stretch reads AFGKHSAATDIASSLSDDQV. Residues 2017 to 2033 traverse the membrane as a helical segment; that stretch reads PQAFLFMLLVQFGTMVI. Residues 2034 to 2047 lie on the Cytoplasmic side of the membrane; the sequence is DRALYLRKTVLGKL. Residues 2048–2068 form a helical membrane-spanning segment; that stretch reads AFQVVLVVAIHIWMFFILPAV. At 2069-2076 the chain is on the extracellular side; sequence TERMFSQN. Residues 2077–2092 form a helical membrane-spanning segment; sequence AVAQLWYFVKCIYFAL. Residues 2093 to 2192 lie on the Cytoplasmic side of the membrane; it reads SAYQIRCGYP…KKKIVKYGMG (100 aa). The chain crosses the membrane as a helical span at residues 2193–2213; it reads GLIILFLIAIIWFPLLFMSLI. Residues 2214 to 2457 lie on the Extracellular side of the membrane; that stretch reads RSVVGVVNQP…IFSDKVSPPS (244 aa). Cysteines 2437 and 2441 form a disulfide. Residues 2458–2478 form a helical membrane-spanning segment; that stretch reads LGFLAGYGIVGLYVSIVLVVG. Over 2479–2547 the chain is Cytoplasmic; sequence KFVRGFFSEI…TMIKWTRERE (69 aa).

Belongs to the PIEZO (TC 1.A.75) family. As to quaternary structure, homotrimer; the homotrimer forms a propeller-shaped Piezo channel with a cation-ion conducting pore. Heterotrimeric interaction may occur between PIEZO1 and PIEZO2. Interacts with PKD2. Interacts with STOMl3. Interacts with TMC1, TMC2, PCDG15 and CIB2; the interaction may be part of the MET complex. Interacts with MDFIC (via C-terminus); the interaction prolongs Piezo channel inactivation. Interacts with MDFI (via C-terminus); the interaction prolongs Piezo channel inactivation. In terms of tissue distribution, expressed in bladder, colon, kidney and skin. Also expressed in bone marrow, liver, lung, spleen and erythrocytes (at protein level). Expressed in myoblasts (at protein level). Expressed in red blood cells. Expressed in cochlear inner and outer hair cells (IHCs and OHCs) and vestibular organ HCs.

It is found in the endoplasmic reticulum membrane. The protein resides in the endoplasmic reticulum-Golgi intermediate compartment membrane. The protein localises to the cell membrane. It localises to the cell projection. Its subcellular location is the lamellipodium membrane. It catalyses the reaction K(+)(in) = K(+)(out). It carries out the reaction Na(+)(in) = Na(+)(out). The catalysed reaction is Ca(2+)(in) = Ca(2+)(out). The enzyme catalyses Mg(2+)(in) = Mg(2+)(out). Its activity is regulated as follows. Regulated by auxillary subunits MDFIC and MDFI. Down-regulated by phosphatidylserines exposed on the cell surface. Divalent ions decrease the single-channel permeability of K(+). In terms of biological role, pore-forming subunit of the mechanosensitive non-specific cation Piezo channel required for rapidly adapting mechanically activated (MA) currents and has a key role in sensing touch and tactile pain. Piezo channels are homotrimeric three-blade propeller-shaped structures that utilize a cap-motion and plug-and-latch mechanism to gate their ion-conducting pathways. Generates currents characterized by a linear current-voltage relationship that are sensitive to ruthenium red and gadolinium. Conductance to monovalent alkali ions is highest for K(+), intermediate for Na(+) and lowest for Li(+). Divalent ions except for Mn(2+) permeate the channel but more slowly than the monovalent ions and they also reduce K(+) currents. Plays a key role in epithelial cell adhesion by maintaining integrin activation through R-Ras recruitment to the ER, most probably in its activated state, and subsequent stimulation of calpain signaling. In inner ear hair cells, PIEZO1/2 subunits may constitute part of the mechanotransducer (MET) non-selective cation channel complex where they may act as pore-forming ion-conducting component in the complex. In the kidney, may contribute to the detection of intraluminal pressure changes and to urine flow sensing. Acts as a shear-stress sensor that promotes endothelial cell organization and alignment in the direction of blood flow through calpain activation. Plays a key role in blood vessel formation and vascular structure in both development and adult physiology. Acts as a sensor of phosphatidylserine (PS) flipping at the plasma membrane and governs morphogenesis of muscle cells. In myoblasts, flippase-mediated PS enrichment at the inner leaflet of plasma membrane triggers channel activation and Ca(2+) influx followed by Rho GTPases signal transduction, leading to assembly of cortical actomyosin fibers and myotube formation. The polypeptide is Piezo-type mechanosensitive ion channel component 1 (Mus musculus (Mouse)).